The sequence spans 307 residues: Sporulation sigma-E factor-processing peptidase (307 aa).

5 helical membrane passes run 7–27, 36–56, 57–77, 89–109, and 127–147; these read LIWM…AVVL, LLLG…PFSH, LMVH…MTFG, LTFY…HFLF, and FGDP…SYFS. Asp-183 is an active-site residue.

It belongs to the peptidase U4 family. In terms of assembly, self-associates. Interacts with SigE. Interacts with SpoIIR.

The protein localises to the cell membrane. In terms of biological role, probable aspartic protease that is responsible for the proteolytic cleavage of the RNA polymerase sigma E factor (SigE/spoIIGB) to yield the active peptide in the mother cell during sporulation. Responds to a signal from the forespore that is triggered by the extracellular signal protein SpoIIR. In Priestia megaterium (strain ATCC 12872 / QMB1551) (Bacillus megaterium), this protein is Sporulation sigma-E factor-processing peptidase.